The sequence spans 341 residues: MEPAFGEVNQLGGVFVNGRPLPNAIRLRIVELAQLGIRPCDISRQLRVSHGCVSKILARYNETGSILPGAIGGSKPRVTTPTVVKHIRTYKQRDPGIFAWEIRDRLLADGVCDKYNVPSVSSISRILRNKIGNLAQQAHYDSYKQHQPAPQPALPYNHIYSYPSPITAAAAKVPTPPGVPAIPGSVAMPRTWPSSHSVTDILGIRSITDQVSDSSPYHSPKVEEWSSLGRNNFPAAAPHAVNGLEKGALEQETKYSQAPNGLPAVGSFVSASSMAPYPTPAQVSPYMTYSAAPSGYVAGHGWQHAGSTPLSPHNCDIPASLAFKGMQAAREGSHSVTASAL.

Positions 4-130 form a DNA-binding region, paired; the sequence is AFGEVNQLGG…SSISRILRNK (127 aa). Residues 7-63 are PAI subdomain; that stretch reads EVNQLGGVFVNGRPLPNAIRLRIVELAQLGIRPCDISRQLRVSHGCVSKILARYNET. The tract at residues 82 to 130 is RED subdomain; the sequence is TVVKHIRTYKQRDPGIFAWEIRDRLLADGVCDKYNVPSVSSISRILRNK. Residues 168–189 form an interaction with KDM5B region; the sequence is AAAAKVPTPPGVPAIPGSVAMP.

In terms of assembly, interacts with KDM5B.

It localises to the nucleus. In terms of biological role, transcription factor required for normal development of thymus, parathyroid glands, ultimobranchial bodies, teeth, skeletal elements of skull and larynx as well as distal limbs. This chain is Paired box protein Pax-9 (PAX9), found in Saguinus oedipus (Cotton-top tamarin).